The chain runs to 484 residues: Poly(A) RNA polymerase GLD2 (484 aa).

Phosphoserine is present on residues S62 and S69. Positions 76 to 92 match the Nuclear localization signal motif; the sequence is KRISDEKAFPLDGKRQR. A Phosphoserine modification is found at S95. Positions 213 and 215 each coordinate Mg(2+). The PAP-associated domain occupies 386 to 440; that stretch reads SLGDLLLGFLKYYATEFDWNTQMISVREAKAIPRPDDMEWRNKYICVEEPFDGTN.

This sequence belongs to the DNA polymerase type-B-like family. GLD2 subfamily. Interacts with CPEB1, CPEB2, CPSF1 and PABPC1. Interacts with QKI isoform QKI7; promoting recruitment to miRNA miR-122 and miR-122 stabilization. The cofactor is Mg(2+). Mn(2+) serves as cofactor. As to expression, ubiquitous. In brain, it is highly expressed in the cerebral cortex, cerebellum, hippocampus and olfactory bulb.

Its subcellular location is the cytoplasm. The protein localises to the nucleus. It carries out the reaction RNA(n) + ATP = RNA(n)-3'-adenine ribonucleotide + diphosphate. In terms of biological role, cytoplasmic poly(A) RNA polymerase that adds successive AMP monomers to the 3'-end of specific RNAs, forming a poly(A) tail. In contrast to the canonical nuclear poly(A) RNA polymerase, it only adds poly(A) to selected cytoplasmic mRNAs. Does not play a role in replication-dependent histone mRNA degradation. Adds a single nucleotide to the 3' end of specific miRNAs, monoadenylation stabilizes and prolongs the activity of some but not all miRNAs. The protein is Poly(A) RNA polymerase GLD2 (Tent2) of Mus musculus (Mouse).